A 161-amino-acid polypeptide reads, in one-letter code: Nucleotide-binding protein Tbd_1846 (161 aa).

This sequence belongs to the YajQ family.

Its function is as follows. Nucleotide-binding protein. The polypeptide is Nucleotide-binding protein Tbd_1846 (Thiobacillus denitrificans (strain ATCC 25259 / T1)).